A 347-amino-acid polypeptide reads, in one-letter code: GMP reductase (347 aa).

Ala-108–Ala-131 serves as a coordination point for NADP(+). Positions 181 and 183 each coordinate K(+). Cys-186 acts as the Thioimidate intermediate in catalysis. Residue Ile-216–Val-239 coordinates NADP(+).

This sequence belongs to the IMPDH/GMPR family. GuaC type 1 subfamily. As to quaternary structure, homotetramer.

It carries out the reaction IMP + NH4(+) + NADP(+) = GMP + NADPH + 2 H(+). Its function is as follows. Catalyzes the irreversible NADPH-dependent deamination of GMP to IMP. It functions in the conversion of nucleobase, nucleoside and nucleotide derivatives of G to A nucleotides, and in maintaining the intracellular balance of A and G nucleotides. This chain is GMP reductase, found in Shigella boydii serotype 18 (strain CDC 3083-94 / BS512).